A 584-amino-acid polypeptide reads, in one-letter code: MDLLWMPLLLVAACVSAVHSSPEVNAGVSSIHITKPVHILEERSLLVLTPAGLTQMLNQTRFLMVLFHNPSSKQSRNLAEELGKAVEIMGKGKNGIGFGKVDITIEKELQQEFGITKAPELKLFFEGNRSEPISCKGVVESAALVVWLRRQISQKAFLFNSSEQVAEFVISRPLVIVGFFQDLEEEVAELFYDVIKDFPELTFGVITIGNVIGRFHVTLDSVLVFKKGKIVNRQKLINDSTNKQELNRVIKQHLTDFVIEYNTENKDLISELHIMSHMLLFVSKSSESYGIIIQHYKLASKEFQNKILFILVDADEPRNGRVFKYFRVTEVDIPSVQILNLSSDARYKMPSDDITYESLKKFGRSFLSKNATKHQSSEEIPKYWDQGLVKQLVGKNFNVVVFDKEKDVFVMFYAPWSKKCKMLFPLLEELGRKYQNHSTIIIAKIDVTANDIQLMYLDRYPFFRLFPSGSQQAVLYKGEHTLKGFSDFLESHIKTKIEDEDELLSVEQNEVIEEEVLAEEKEVPMMRKGLPEQQSPELENMTKYVSKLEEPAGKKKTSEEVVVVVAKPKGPPVQKKKPKVKEEL.

An N-terminal signal peptide occupies residues 1–20 (MDLLWMPLLLVAACVSAVHS). N-linked (GlcNAc...) asparagine glycosylation is found at N58, N128, N160, and N340. The Thioredoxin domain occupies 388-451 (LVKQLVGKNF…IAKIDVTAND (64 aa)). N540 is a glycosylation site (N-linked (GlcNAc...) asparagine). The Prevents secretion from ER signature appears at 581–584 (KEEL).

This sequence belongs to the protein disulfide isomerase family. In terms of assembly, homodimer. The homodimer is not disulfide-linked. Interacts with ERO1A and CLGN. In terms of processing, N-glycosylated. Testis-specific.

The protein localises to the endoplasmic reticulum. Probable redox-inactive chaperone involved in spermatogenesis. This Homo sapiens (Human) protein is Protein disulfide-isomerase-like protein of the testis (PDILT).